Consider the following 391-residue polypeptide: D-alanine--D-alanine ligase (391 aa).

Residues 1 to 24 (MSSENLPQSPERAESPQAPRRKPR) are disordered. One can recognise an ATP-grasp domain in the interval 171 to 381 (KRVFLSFGLP…YPELVDRLIQ (211 aa)). Residue 207 to 262 (AGEHGWPLFIKPARGGSSMGITKVDSVEGLDAAIEEARRHDPKFLVESLLRGREIE) participates in ATP binding. 3 residues coordinate Mg(2+): aspartate 335, glutamate 348, and asparagine 350.

It belongs to the D-alanine--D-alanine ligase family. Requires Mg(2+) as cofactor. Mn(2+) is required as a cofactor.

The protein resides in the cytoplasm. The enzyme catalyses 2 D-alanine + ATP = D-alanyl-D-alanine + ADP + phosphate + H(+). The protein operates within cell wall biogenesis; peptidoglycan biosynthesis. Cell wall formation. The chain is D-alanine--D-alanine ligase from Streptomyces griseus subsp. griseus (strain JCM 4626 / CBS 651.72 / NBRC 13350 / KCC S-0626 / ISP 5235).